Consider the following 282-residue polypeptide: Elongation factor Ts (282 aa).

The tract at residues 80–83 is involved in Mg(2+) ion dislocation from EF-Tu; sequence TDFV.

This sequence belongs to the EF-Ts family.

It is found in the cytoplasm. Associates with the EF-Tu.GDP complex and induces the exchange of GDP to GTP. It remains bound to the aminoacyl-tRNA.EF-Tu.GTP complex up to the GTP hydrolysis stage on the ribosome. This chain is Elongation factor Ts, found in Protochlamydia amoebophila (strain UWE25).